We begin with the raw amino-acid sequence, 173 residues long: Translation initiation factor IF-3 (173 aa).

Belongs to the IF-3 family. Monomer.

It is found in the cytoplasm. IF-3 binds to the 30S ribosomal subunit and shifts the equilibrium between 70S ribosomes and their 50S and 30S subunits in favor of the free subunits, thus enhancing the availability of 30S subunits on which protein synthesis initiation begins. The polypeptide is Translation initiation factor IF-3 (Aromatoleum aromaticum (strain DSM 19018 / LMG 30748 / EbN1) (Azoarcus sp. (strain EbN1))).